A 2963-amino-acid chain; its full sequence is tRNA nuclease CdiA (2963 aa).

The N-terminal stretch at 1 to 29 (MIPIYLRQKLISYALIYLVAIQPIMPVMA) is a signal peptide. The segment at 35–320 (AQGSTALDKA…AQGNITLNSH (286 aa)) is two-partner system transport domain (TPS). An FHA-1 region spans residues 573–1074 (GNVVAQEHAQ…MVLNTASLLN (502 aa)). A receptor binding domain (RBD) region spans residues 1075-1342 (RRDGFSVTEK…KPLTRAQLSD (268 aa)). The interval 1343–1528 (YPLPDSNNGL…LAKAEQAHLQ (186 aa)) is YP domain. Residues 1529–1751 (GSVISGNKVE…ATLQAERDVN (223 aa)) form a periplasmic FHA-1 repeat (pFR) region. Residues 1759–1770 (TRNQHIDSEDKT) show a composition bias toward basic and acidic residues. 2 disordered regions span residues 1759-1787 (TRNQ…LTAS) and 1992-2012 (SKSS…SASA). The segment at 1762–2314 (QHIDSEDKTT…DSDNYNSIQK (553 aa)) is FHA-2. Polar residues predominate over residues 1771 to 1782 (TGYTRSTLSSGG). A VEDN CT cleavage motif motif is present at residues 2694–2697 (VEDN). Positions 2694 to 2963 (VEDNNLSFGK…TGRVRNFHPN (270 aa)) are C-terminal effector domain (CT).

It in the N-terminal section; belongs to the CdiA toxin family. The protein in the C-terminal section; belongs to the bacterial EndoU family. As to quaternary structure, forms a 1:1 complex with cognate immunity protein CdiI.

It localises to the secreted. The protein resides in the target cell. Its subcellular location is the target cell cytoplasm. Its function is as follows. Toxic component of a toxin-immunity protein module, which functions as a cellular contact-dependent growth inhibition (CDI) system. CDI modules allow bacteria to communicate with and inhibit the growth of closely related neighboring bacteria in a contact-dependent fashion. Targeting of the CT domain (residues 2824-2963) in the absence of immunity protein inhibits cell growth and causes tRNA(UUC-Glu) cleavage in the anticodon loop; expression of cognate immunity protein CdiI-43969 neutralizes growth inhibition and tRNA(UUC-Glu) remains intact, whereas non-cognate immunity proteins do not confer protection from the toxic effects. Functionally, the CdiA protein is thought to be exported from the cell through the central lumen of CdiB, the other half of its two-partner system (TPS). The TPS domain probably remains associated with CdiB while the FHA-1 domain forms an extended filament with the receptor-binding domain (RBD) at its extremity; in the secretion arrested state the C-terminus of the RBD and YP domains form a hairpin-like structure as the FHA-2, PT and CT domains are periplasmic. The YP domain is probably responsible for this arrest at the point where it re-enters the host cell periplasm. Upon binding to a target cell outer membrane receptor a signal is transmitted to activate secretion. The filament elongates slightly, the rest of CdiA is secreted and the FHA-2 domain becomes stably associated with the target cell's outer membrane where it facilitates entry of the toxic CT domain into the target cell periplasm. From there the toxic CT domain is cleaved and gains access to the target cell cytoplasm via an inner membrane protein. In Yersinia mollaretii (strain ATCC 43969 / DSM 18520 / CIP 103324 / CNY 7263 / WAIP 204), this protein is tRNA nuclease CdiA.